The sequence spans 161 residues: 6,7-dimethyl-8-ribityllumazine synthase (161 aa).

5-amino-6-(D-ribitylamino)uracil is bound by residues W25, 57–59 (AFE), and 80–82 (VVI). 85–86 (GT) is a binding site for (2S)-2-hydroxy-3-oxobutyl phosphate. The Proton donor role is filled by H88. F113 lines the 5-amino-6-(D-ribitylamino)uracil pocket. R127 serves as a coordination point for (2S)-2-hydroxy-3-oxobutyl phosphate.

Belongs to the DMRL synthase family.

The enzyme catalyses (2S)-2-hydroxy-3-oxobutyl phosphate + 5-amino-6-(D-ribitylamino)uracil = 6,7-dimethyl-8-(1-D-ribityl)lumazine + phosphate + 2 H2O + H(+). Its pathway is cofactor biosynthesis; riboflavin biosynthesis; riboflavin from 2-hydroxy-3-oxobutyl phosphate and 5-amino-6-(D-ribitylamino)uracil: step 1/2. Functionally, catalyzes the formation of 6,7-dimethyl-8-ribityllumazine by condensation of 5-amino-6-(D-ribitylamino)uracil with 3,4-dihydroxy-2-butanone 4-phosphate. This is the penultimate step in the biosynthesis of riboflavin. The chain is 6,7-dimethyl-8-ribityllumazine synthase from Kineococcus radiotolerans (strain ATCC BAA-149 / DSM 14245 / SRS30216).